Consider the following 258-residue polypeptide: UPF0246 protein HI_0984 (258 aa).

The protein belongs to the UPF0246 family.

The protein is UPF0246 protein HI_0984 of Haemophilus influenzae (strain ATCC 51907 / DSM 11121 / KW20 / Rd).